The primary structure comprises 394 residues: Nuclear hormone receptor family member nhr-103 (394 aa).

Residues 8–83 (SGPCEICGQK…VGMDSKKFQT (76 aa)) constitute a DNA-binding region (nuclear receptor). The segment at 11 to 31 (CEICGQKTSGRHFGVLSCRSC) adopts an NR C4-type zinc-finger fold. The NR C4-type; degenerate zinc finger occupies 47–66 (QCVKGTCKIFEDGKFNCKQC). The NR LBD domain maps to 126–394 (YLVDMAKNLL…FSHPEMFETT (269 aa)).

The protein belongs to the nuclear hormone receptor family.

Its subcellular location is the nucleus. Orphan nuclear receptor. The sequence is that of Nuclear hormone receptor family member nhr-103 (nhr-103) from Caenorhabditis elegans.